Here is a 262-residue protein sequence, read N- to C-terminus: Nodulation protein J (262 aa).

An ABC transmembrane type-2 domain is found at 33–259; that stretch reads ASILGNLAEP…FLSVGLLQRR (227 aa). The next 6 membrane-spanning stretches (helical) occupy residues 35-55, 62-82, 125-145, 147-167, 177-197, and 236-256; these read ILGN…GLGA, GIPY…MISA, ALLA…ASWP, VLFA…LAMI, YFIF…GAVF, and LHIS…VGLL.

The protein belongs to the ABC-2 integral membrane protein family. Lipooligosaccharide exporter (TC 3.A.1.102) subfamily. In terms of assembly, the complex is composed of two ATP-binding proteins (NodI) and two transmembrane proteins (NodJ).

It is found in the cell inner membrane. Its function is as follows. Part of the ABC transporter complex NodIJ involved in the export of the nodulation factors (Nod factors), the bacterial signal molecules that induce symbiosis and subsequent nodulation induction. Nod factors are LCO (lipo-chitin oligosaccharide), a modified beta-1,4-linked N-acetylglucosamine oligosaccharide. This subunit encodes the transporter. This chain is Nodulation protein J (nodJ), found in Sinorhizobium fredii (strain NBRC 101917 / NGR234).